Reading from the N-terminus, the 162-residue chain is uncharacterized protein (162 aa).

It localises to the cytoplasm. The protein resides in the nucleus. This is an uncharacterized protein from Schizosaccharomyces pombe (strain 972 / ATCC 24843) (Fission yeast).